Consider the following 312-residue polypeptide: Putative endo-1,4-beta-xylanase (312 aa).

The region spanning 1–301 is the GH10 domain; it reads MKQQYLLDYE…KPCFYSFLQA (301 aa). The Proton donor role is filled by Glu-104. Residue Glu-216 is the Nucleophile of the active site.

It belongs to the glycosyl hydrolase 10 (cellulase F) family.

It catalyses the reaction Endohydrolysis of (1-&gt;4)-beta-D-xylosidic linkages in xylans.. Its pathway is glycan degradation; xylan degradation. In terms of biological role, could be a xylanase. In Caldicellulosiruptor saccharolyticus (Caldocellum saccharolyticum), this protein is Putative endo-1,4-beta-xylanase.